We begin with the raw amino-acid sequence, 641 residues long: Isomalto-dextranase (641 aa).

Residues 1 to 39 (MMNLSRRTLLTTGSAATLAYALGMAGSAQAATAVTARPG) constitute a signal peptide (tat-type signal). The Nucleophile role is filled by D227. D288 serves as the catalytic Proton donor. Residues 500–640 (TRYPAAFAAW…AINLNWIELD (141 aa)) enclose the CBM6 domain. The segment at 556-588 (SGYRYANATDDNTTSKTTTKKANPEKADRSTVD) is disordered. Residues 561–576 (ANATDDNTTSKTTTKK) show a composition bias toward low complexity. Residues 577-586 (ANPEKADRST) are compositionally biased toward basic and acidic residues.

It belongs to the glycosyl hydrolase 27 family. Post-translationally, predicted to be exported by the Tat system. The position of the signal peptide cleavage has been experimentally proven.

It localises to the secreted. The catalysed reaction is Hydrolysis of (1-&gt;6)-alpha-D-glucosidic linkages in polysaccharides, to remove successive isomaltose units from the non-reducing ends of the chains.. The polypeptide is Isomalto-dextranase (imd) (Arthrobacter globiformis).